The primary structure comprises 336 residues: Potassium channel subfamily K member 1 (336 aa).

Residues 1-20 (MLQSLAGSSCVRLVERHRSA) are Cytoplasmic-facing. The chain crosses the membrane as a helical span at residues 21-41 (RCFGFLVLGYLLYLVFGAVVF). At 42 to 103 (SSVELPYEDL…SNASGNWNWD (62 aa)) the chain is on the extracellular side. N-linked (GlcNAc...) asparagine glycosylation occurs at N95. Positions 104–116 (FTSALFFASTVLS) form an intramembrane region, helical. The stretch at 117–122 (TTGYGH) is an intramembrane region. The selectivity filter 1 stretch occupies residues 117–122 (TTGYGH). Residues 123 to 132 (TVPLSDGGKA) are Extracellular-facing. Residues 133 to 156 (FCIIYSVIGIPFTLLFLTAVVQRI) traverse the membrane as a helical segment. The Cytoplasmic portion of the chain corresponds to 157 to 181 (TVHVTRRPVLYFHIRWGFSKQVVAI). A helical transmembrane segment spans residues 182 to 202 (VHAVLLGFVTVSCFFFIPAAV). The Extracellular portion of the chain corresponds to 203 to 211 (FSVLEDDWN). Positions 212–224 (FLESFYFCFISLS) form an intramembrane region, helical. The interval 225–230 (TIGLGD) is selectivity filter 2. The stretch at 225–231 (TIGLGDY) is an intramembrane region. The Extracellular segment spans residues 232 to 243 (VPGEGYNQKFRE). A helical transmembrane segment spans residues 244–267 (LYKIGITCYLLLGLIAMLVVLETF). The Cytoplasmic segment spans residues 268 to 336 (CELHELKKFR…SACMDGPANH (69 aa)). K274 participates in a covalent cross-link: Glycyl lysine isopeptide (Lys-Gly) (interchain with G-Cter in SUMO). The interval 293–299 (IIEHDQL) is important for intracellular retention in recycling endosomes. Residues 315–336 (QKQNEPFVATQSSACMDGPANH) are disordered. S326 bears the Phosphoserine mark.

The protein belongs to the two pore domain potassium channel (TC 1.A.1.8) family. In terms of assembly, homodimer; disulfide-linked. Heterodimer with KCNK2; disulfide-linked. In astrocytes, forms mostly heterodimeric potassium channels with KCNK2, with only a minor proportion of functional channels containing homodimeric KCNK1. Interacts with KCNK3 and KCNK9, forming functional heterodimeric channels. Interacts with GNG4. Identified in a complex with PSD and ARF6; interacts only with PSD that is bound to ARF6. Interacts with UBE2I. In terms of processing, sumoylation is controversial. Sumoylated by UBE2I. Not sumoylated when expressed in xenopus oocytes or mammalian cells. Sumoylation inactivates the channel, but does not interfere with expression at the cell membrane. Sumoylation of a single subunit is sufficient to silence the dimeric channel. Sumoylation of KCNK1 is sufficient to silence heterodimeric channels formed by KCNK1 and KCNK3 or KCNK9. Desumoylated by SENP1; this activates the channel. Desumoylated by SENP1; this strongly increases halothane-mediated activation of heterodimeric channels formed with KCNK9. SENP1 treatment has no effect.

The protein resides in the cell membrane. The protein localises to the recycling endosome. It localises to the synaptic cell membrane. Its subcellular location is the cytoplasmic vesicle. It is found in the perikaryon. The protein resides in the cell projection. The protein localises to the dendrite. It localises to the apical cell membrane. The catalysed reaction is K(+)(in) = K(+)(out). The enzyme catalyses NH4(+)(in) = NH4(+)(out). It carries out the reaction Na(+)(in) = Na(+)(out). It catalyses the reaction Rb(+)(in) = Rb(+)(out). The catalysed reaction is Cs(+)(in) = Cs(+)(out). The enzyme catalyses Li(+)(in) = Li(+)(out). It carries out the reaction L-glutamate(out) = L-glutamate(in). It catalyses the reaction chloride(in) = chloride(out). Ion channel that contributes to passive transmembrane potassium transport and to the regulation of the resting membrane potential in brain astrocytes, but also in kidney and in other tissues. Forms dimeric channels through which potassium ions pass in accordance with their electrochemical gradient. The channel is selective for K(+) ions at physiological potassium concentrations and at neutral pH, but becomes permeable to Na(+) at subphysiological K(+) levels, and upon acidification of the extracellular medium. The homodimer has very low potassium channel activity, when expressed in heterologous systems, and can function as weakly inward rectifying potassium channel. Channel activity is modulated by activation of serotonin receptors. Heterodimeric channels containing KCNK1 and KCNK2 have much higher activity, and may represent the predominant form in astrocytes. Heterodimeric channels containing KCNK1 and KCNK3 or KCNK9 have much higher activity. Heterodimeric channels formed by KCNK1 and KCNK9 may contribute to halothane-sensitive currents. Mediates outward rectifying potassium currents in dentate gyrus granule cells and contributes to the regulation of their resting membrane potential. Contributes to the regulation of action potential firing in dentate gyrus granule cells and down-regulates their intrinsic excitability. In astrocytes, the heterodimer formed by KCNK1 and KCNK2 is required for rapid glutamate release in response to activation of G-protein coupled receptors, such as F2R and CNR1. Required for normal ion and water transport in the kidney. Contributes to the regulation of the resting membrane potential of pancreatic beta cells. The low channel activity of homodimeric KCNK1 may be due to sumoylation. The low channel activity may be due to rapid internalization from the cell membrane and retention in recycling endosomes. Permeable to monovalent cations with ion selectivity for K(+) &gt; Rb(+) &gt;&gt; NH4(+) &gt;&gt; Cs(+) = Na(+) = Li(+). This chain is Potassium channel subfamily K member 1, found in Pongo abelii (Sumatran orangutan).